The sequence spans 183 residues: Apo-citrate lyase phosphoribosyl-dephospho-CoA transferase (183 aa).

The protein belongs to the CitX family.

The catalysed reaction is apo-[citrate lyase ACP] + 2'-(5''-triphospho-alpha-D-ribosyl)-3'-dephospho-CoA = holo-[citrate lyase ACP] + diphosphate. Transfers 2-(5''-triphosphoribosyl)-3'-dephosphocoenzyme-A on a serine residue to the apo-acyl carrier protein (gamma chain) of the citrate lyase to yield holo-acyl carrier protein. In Citrobacter koseri (strain ATCC BAA-895 / CDC 4225-83 / SGSC4696), this protein is Apo-citrate lyase phosphoribosyl-dephospho-CoA transferase.